A 338-amino-acid chain; its full sequence is MIELHQVSKSFNVNGKTVEAVKNVSITVEKGEIFGVVGYSGAGKSTLVRCINLLERPDAGQVVIDGKNLSTLSSKELRVARRKIGMIFQGYNLLKTATVYDNIAKPLKLEGVPKDEIETRVNKYLSIVGLEDKRNNYPSQLSGGQKQRVAIARALAHEPEILLSDEATSALDPETTEAILQLLLKINAELGITIFLITHELDVIQRICDRVAVMENGHLVEQGTVLDIFTKAKHATTKRFVGSEASFDIPQDLLEKYVATGKLVSLHFIGDEADEPALALVSRKFDVLPSILAGGIDHLKNGTLGKLLVHLKGDEVEYSKAISYLKESGVVVEEVELL.

The ABC transporter domain maps to 2–241 (IELHQVSKSF…AKHATTKRFV (240 aa)). Residue 38-45 (GYSGAGKS) coordinates ATP.

The protein belongs to the ABC transporter superfamily. Methionine importer (TC 3.A.1.24) family. As to quaternary structure, the complex is composed of two ATP-binding proteins (MetN), two transmembrane proteins (MetI) and a solute-binding protein (MetQ).

The protein localises to the cell membrane. It carries out the reaction L-methionine(out) + ATP + H2O = L-methionine(in) + ADP + phosphate + H(+). It catalyses the reaction D-methionine(out) + ATP + H2O = D-methionine(in) + ADP + phosphate + H(+). In terms of biological role, part of the ABC transporter complex MetNIQ involved in methionine import. Responsible for energy coupling to the transport system. The protein is Methionine import ATP-binding protein MetN 1 of Listeria monocytogenes serotype 4b (strain F2365).